A 26-amino-acid polypeptide reads, in one-letter code: Dermaseptin-J3 (26 aa).

Val26 is modified (valine amide).

Expressed by the skin glands.

It localises to the secreted. Its function is as follows. Has antimicrobial activity. In Phasmahyla jandaia (Jandaia leaf frog), this protein is Dermaseptin-J3.